Here is a 487-residue protein sequence, read N- to C-terminus: Recombining binding protein suppressor of hairless (487 aa).

DNA-binding regions lie at residues Gln-44 to Phe-54 and Ser-152 to Lys-157. Lys-162 carries the N6-acetyllysine modification. The interval Arg-179–Thr-184 is DNA-binding. Residues Pro-342 to Thr-432 enclose the IPT/TIG domain. Residues Ser-452 to Tyr-468 are compositionally biased toward polar residues. A disordered region spans residues Ser-452–Ser-487. Over residues Thr-469–Ser-487 the composition is skewed to low complexity.

The protein belongs to the Su(H) family. Interacts with activated NOTCH1, NOTCH2 or NOTCH3. Interacts with MINT/SHARP. This interaction may mediate the recruitment of large corepressor complexes containing proteins such as HDAC1, HDAC2, NCOR2, SAP30, FHL1/KYOT2 and CIR1. Interacts with EP300, MAML1 and PTF1A. Interacts with RITA1, leading to nuclear export, prevent the interaction between RBPJ and NICD product and subsequent down-regulation of the Notch signaling pathway. Interacts with SNW1. Interacts with CHCHD2 and CXXC5. Interacts with BEND6 (via BEN domain). Interacts with NKAPL. Interacts with ZMIZ1. Interacts with RBM15. Interacts with L3MBTL3 and KDM1A; the interaction with KDM1A is weaker in the absence of L3MBTL3 and the interaction with L3MBTL3 is impaired by Notch-derived peptides containing the intracellular domain (NICD).

Its subcellular location is the nucleus. The protein localises to the cytoplasm. In terms of biological role, transcriptional regulator that plays a central role in Notch signaling, a signaling pathway involved in cell-cell communication that regulates a broad spectrum of cell-fate determinations. Acts as a transcriptional repressor when it is not associated with Notch proteins. When associated with some NICD product of Notch proteins (Notch intracellular domain), it acts as a transcriptional activator that activates transcription of Notch target genes. Probably represses or activates transcription via the recruitment of chromatin remodeling complexes containing histone deacetylase or histone acetylase proteins, respectively. Specifically binds to the immunoglobulin kappa-type J segment recombination signal sequence. Binds specifically to methylated DNA. Binds to the oxygen responsive element of COX4I2 and activates its transcription under hypoxia conditions (4% oxygen). Negatively regulates the phagocyte oxidative burst in response to bacterial infection by repressing transcription of NADPH oxidase subunits. This Bos taurus (Bovine) protein is Recombining binding protein suppressor of hairless (RBPJ).